A 119-amino-acid chain; its full sequence is Gibberellin-regulated protein 9 (119 aa).

A signal peptide spans 1–24; sequence MKKMNVVAFVTLIISFLLLSQVLA.

Belongs to the GASA family. Six disulfide bonds may be present.

The protein resides in the secreted. Gibberellin-regulated protein that may function in hormonal controlled steps of development such as seed germination, flowering and seed maturation. In Arabidopsis thaliana (Mouse-ear cress), this protein is Gibberellin-regulated protein 9 (GASA9).